Consider the following 295-residue polypeptide: UDP-N-acetylenolpyruvoylglucosamine reductase (295 aa).

One can recognise an FAD-binding PCMH-type domain in the interval 24–188 (KVGGNAEIFF…LKAIFKANKG (165 aa)). R168 is an active-site residue. S217 (proton donor) is an active-site residue. Residue E287 is part of the active site.

This sequence belongs to the MurB family. FAD serves as cofactor.

The protein resides in the cytoplasm. It catalyses the reaction UDP-N-acetyl-alpha-D-muramate + NADP(+) = UDP-N-acetyl-3-O-(1-carboxyvinyl)-alpha-D-glucosamine + NADPH + H(+). Its pathway is cell wall biogenesis; peptidoglycan biosynthesis. In terms of biological role, cell wall formation. The polypeptide is UDP-N-acetylenolpyruvoylglucosamine reductase (Rickettsia typhi (strain ATCC VR-144 / Wilmington)).